The following is a 71-amino-acid chain: UPF0346 protein SMU_1621c (71 aa).

The protein belongs to the UPF0346 family.

This Streptococcus mutans serotype c (strain ATCC 700610 / UA159) protein is UPF0346 protein SMU_1621c.